The chain runs to 578 residues: Proline--tRNA ligase (578 aa).

It belongs to the class-II aminoacyl-tRNA synthetase family. ProS type 1 subfamily. In terms of assembly, homodimer.

The protein resides in the cytoplasm. It catalyses the reaction tRNA(Pro) + L-proline + ATP = L-prolyl-tRNA(Pro) + AMP + diphosphate. Its function is as follows. Catalyzes the attachment of proline to tRNA(Pro) in a two-step reaction: proline is first activated by ATP to form Pro-AMP and then transferred to the acceptor end of tRNA(Pro). As ProRS can inadvertently accommodate and process non-cognate amino acids such as alanine and cysteine, to avoid such errors it has two additional distinct editing activities against alanine. One activity is designated as 'pretransfer' editing and involves the tRNA(Pro)-independent hydrolysis of activated Ala-AMP. The other activity is designated 'posttransfer' editing and involves deacylation of mischarged Ala-tRNA(Pro). The misacylated Cys-tRNA(Pro) is not edited by ProRS. The sequence is that of Proline--tRNA ligase from Burkholderia thailandensis (strain ATCC 700388 / DSM 13276 / CCUG 48851 / CIP 106301 / E264).